The following is a 176-amino-acid chain: 3-hydroxydecanoyl-[acyl-carrier-protein] dehydratase (176 aa).

Histidine 75 is a catalytic residue.

Belongs to the thioester dehydratase family. FabA subfamily. Homodimer.

The protein resides in the cytoplasm. The catalysed reaction is a (3R)-hydroxyacyl-[ACP] = a (2E)-enoyl-[ACP] + H2O. It carries out the reaction (3R)-hydroxydecanoyl-[ACP] = (2E)-decenoyl-[ACP] + H2O. It catalyses the reaction (2E)-decenoyl-[ACP] = (3Z)-decenoyl-[ACP]. It functions in the pathway lipid metabolism; fatty acid biosynthesis. In terms of biological role, necessary for the introduction of cis unsaturation into fatty acids. Catalyzes the dehydration of (3R)-3-hydroxydecanoyl-ACP to E-(2)-decenoyl-ACP and then its isomerization to Z-(3)-decenoyl-ACP. Can catalyze the dehydratase reaction for beta-hydroxyacyl-ACPs with saturated chain lengths up to 16:0, being most active on intermediate chain length. The chain is 3-hydroxydecanoyl-[acyl-carrier-protein] dehydratase from Actinobacillus pleuropneumoniae serotype 5b (strain L20).